The following is a 392-amino-acid chain: Succinyl-diaminopimelate desuccinylase (392 aa).

Histidine 75 lines the Zn(2+) pocket. Residue aspartate 77 is part of the active site. Aspartate 108 is a Zn(2+) binding site. Glutamate 147 (proton acceptor) is an active-site residue. Residues glutamate 148, glutamate 176, and histidine 365 each coordinate Zn(2+).

It belongs to the peptidase M20A family. DapE subfamily. Homodimer. Zn(2+) is required as a cofactor. It depends on Co(2+) as a cofactor.

The enzyme catalyses N-succinyl-(2S,6S)-2,6-diaminopimelate + H2O = (2S,6S)-2,6-diaminopimelate + succinate. It functions in the pathway amino-acid biosynthesis; L-lysine biosynthesis via DAP pathway; LL-2,6-diaminopimelate from (S)-tetrahydrodipicolinate (succinylase route): step 3/3. Functionally, catalyzes the hydrolysis of N-succinyl-L,L-diaminopimelic acid (SDAP), forming succinate and LL-2,6-diaminopimelate (DAP), an intermediate involved in the bacterial biosynthesis of lysine and meso-diaminopimelic acid, an essential component of bacterial cell walls. The sequence is that of Succinyl-diaminopimelate desuccinylase from Rhodopseudomonas palustris (strain BisB18).